The chain runs to 568 residues: Cyclin-dependent kinase-like 2 (568 aa).

Positions 4–289 constitute a Protein kinase domain; that stretch reads YENLGLVGEG…CADLLRHDFF (286 aa). ATP is bound by residues 10–18 and K33; that span reads VGEGSYGMV. Positions 45–51 match the [NKR]KIAxRE motif; that stretch reads KKIAMRE. Catalysis depends on D126, which acts as the Proton acceptor. Disordered stretches follow at residues 309-333 and 545-568; these read DARNNSLPKKSQNRKKEKDDALGEE and SHQGAGSPLSDDSEADLPRMEHQH. A compositionally biased stretch (basic and acidic residues) spans 322-333; it reads RKKEKDDALGEE.

The protein belongs to the protein kinase superfamily. CMGC Ser/Thr protein kinase family. CDC2/CDKX subfamily. Expressed in testis, kidney, lung and brain.

Its subcellular location is the cytoplasm. The protein resides in the nucleus. It carries out the reaction L-seryl-[protein] + ATP = O-phospho-L-seryl-[protein] + ADP + H(+). The catalysed reaction is L-threonyl-[protein] + ATP = O-phospho-L-threonyl-[protein] + ADP + H(+). In Mus musculus (Mouse), this protein is Cyclin-dependent kinase-like 2.